The sequence spans 139 residues: Transcription antitermination protein NusB (139 aa).

It belongs to the NusB family.

Its function is as follows. Involved in transcription antitermination. Required for transcription of ribosomal RNA (rRNA) genes. Binds specifically to the boxA antiterminator sequence of the ribosomal RNA (rrn) operons. This is Transcription antitermination protein NusB from Rubrobacter xylanophilus (strain DSM 9941 / JCM 11954 / NBRC 16129 / PRD-1).